Reading from the N-terminus, the 432-residue chain is Probable protein phosphatase 2C 75 (432 aa).

A PPM-type phosphatase domain is found at valine 44–leucine 356. The Mn(2+) site is built by aspartate 80, glycine 81, aspartate 301, and aspartate 347. The segment at serine 372–serine 408 is disordered.

Belongs to the PP2C family. Mg(2+) serves as cofactor. It depends on Mn(2+) as a cofactor.

The catalysed reaction is O-phospho-L-seryl-[protein] + H2O = L-seryl-[protein] + phosphate. It carries out the reaction O-phospho-L-threonyl-[protein] + H2O = L-threonyl-[protein] + phosphate. The sequence is that of Probable protein phosphatase 2C 75 from Oryza sativa subsp. japonica (Rice).